Here is a 398-residue protein sequence, read N- to C-terminus: Bifunctional enzyme IspD/IspF (398 aa).

The interval 1-234 is 2-C-methyl-D-erythritol 4-phosphate cytidylyltransferase; it reads MTNSPRTAAI…SRLMAALGDI (234 aa). Positions 235-398 are 2-C-methyl-D-erythritol 2,4-cyclodiphosphate synthase; the sequence is RTGTGYDVHA…LPWGADGLAG (164 aa). Asp-241 and His-243 together coordinate a divalent metal cation. Residues 241–243 and 267–268 each bind 4-CDP-2-C-methyl-D-erythritol 2-phosphate; these read DVH and HS. A divalent metal cation is bound at residue His-275. 4-CDP-2-C-methyl-D-erythritol 2-phosphate contacts are provided by residues 289-291, 365-368, Phe-372, and Arg-375; these read DIG and TTSE.

It in the N-terminal section; belongs to the IspD/TarI cytidylyltransferase family. IspD subfamily. The protein in the C-terminal section; belongs to the IspF family. It depends on a divalent metal cation as a cofactor.

The enzyme catalyses 2-C-methyl-D-erythritol 4-phosphate + CTP + H(+) = 4-CDP-2-C-methyl-D-erythritol + diphosphate. It catalyses the reaction 4-CDP-2-C-methyl-D-erythritol 2-phosphate = 2-C-methyl-D-erythritol 2,4-cyclic diphosphate + CMP. It functions in the pathway isoprenoid biosynthesis; isopentenyl diphosphate biosynthesis via DXP pathway; isopentenyl diphosphate from 1-deoxy-D-xylulose 5-phosphate: step 2/6. The protein operates within isoprenoid biosynthesis; isopentenyl diphosphate biosynthesis via DXP pathway; isopentenyl diphosphate from 1-deoxy-D-xylulose 5-phosphate: step 4/6. Bifunctional enzyme that catalyzes the formation of 4-diphosphocytidyl-2-C-methyl-D-erythritol from CTP and 2-C-methyl-D-erythritol 4-phosphate (MEP) (IspD), and catalyzes the conversion of 4-diphosphocytidyl-2-C-methyl-D-erythritol 2-phosphate (CDP-ME2P) to 2-C-methyl-D-erythritol 2,4-cyclodiphosphate (ME-CPP) with a corresponding release of cytidine 5-monophosphate (CMP) (IspF). This is Bifunctional enzyme IspD/IspF from Rhodopseudomonas palustris (strain ATCC BAA-98 / CGA009).